A 117-amino-acid chain; its full sequence is Large ribosomal subunit protein bL20 (117 aa).

It belongs to the bacterial ribosomal protein bL20 family.

Functionally, binds directly to 23S ribosomal RNA and is necessary for the in vitro assembly process of the 50S ribosomal subunit. It is not involved in the protein synthesizing functions of that subunit. This chain is Large ribosomal subunit protein bL20, found in Rickettsia bellii (strain OSU 85-389).